The primary structure comprises 186 residues: Early nodulin-like protein 13 (186 aa).

The signal sequence occupies residues 1 to 23; it reads MAQRTLVATFFLIFFLLTNLVCS. Residues 24 to 128 enclose the Phytocyanin domain; sequence KEIIVGGKTS…GEKLHIVVMS (105 aa). Cysteines 82 and 116 form a disulfide. 2 N-linked (GlcNAc...) asparagine glycosylation sites follow: Asn-83 and Asn-90. Ala-165 carries GPI-anchor amidated alanine lipidation. A propeptide spans 166–186 (removed in mature form); sequence SSLTRQVGVLGFVGLLAIVLL.

The protein belongs to the early nodulin-like (ENODL) family. In terms of tissue distribution, mostly expressed in seedlings, siliques and flowers, and, to a lower extent, in roots, stems and seeds, but barely in leaves.

The protein resides in the cell membrane. In terms of biological role, may act as a carbohydrate transporter. Required, together with ENODL11, ENODL12, ENODL13, ENODL14 and ENODL15, for male-female communication and pollen tube reception and burst at the synergid cell surface of the female gametophyte. This chain is Early nodulin-like protein 13, found in Arabidopsis thaliana (Mouse-ear cress).